A 255-amino-acid polypeptide reads, in one-letter code: Tabinhibitin 7 (255 aa).

Residues 1-23 form the signal peptide; it reads MTSILVSSFLLATLVLQYATIDA. The Cell attachment site signature appears at 32–34; that stretch reads RGD. In terms of domain architecture, SCP spans 67 to 211; the sequence is LSKINDVRDH…KARALLTCNF (145 aa).

This sequence belongs to the CRISP family. As to expression, expressed in salivary glands.

It is found in the secreted. In terms of biological role, inhibits platelet aggregation induced by all agonists tested (ADP, arachidonic acid, the thromboxane A2 analog U46619, thrombin, and snake venom snaclecs (TMVA that activates platelet through GPIB, and stejnulxin that specifically acts through GPVI (GP6))). May act by competing with fibrinogen for binding to glycoprotein IIb/IIIa (ITGA2B/ITGB3). The protein is Tabinhibitin 7 of Tabanus yao (Horsefly).